A 466-amino-acid polypeptide reads, in one-letter code: Ribulose bisphosphate carboxylase large chain (466 aa).

At Lys5 the chain carries N6,N6,N6-trimethyllysine. Residues Asn114 and Thr164 each coordinate substrate. Lys166 acts as the Proton acceptor in catalysis. A substrate-binding site is contributed by Lys168. Positions 192, 194, and 195 each coordinate Mg(2+). Lys192 bears the N6-carboxylysine mark. His285 functions as the Proton acceptor in the catalytic mechanism. Residues Arg286, His318, and Ser370 each coordinate substrate.

It belongs to the RuBisCO large chain family. Type I subfamily. As to quaternary structure, heterohexadecamer of 8 large chains and 8 small chains; disulfide-linked. The disulfide link is formed within the large subunit homodimers. Mg(2+) is required as a cofactor. The disulfide bond which can form in the large chain dimeric partners within the hexadecamer appears to be associated with oxidative stress and protein turnover.

It is found in the plastid. Its subcellular location is the chloroplast. The enzyme catalyses 2 (2R)-3-phosphoglycerate + 2 H(+) = D-ribulose 1,5-bisphosphate + CO2 + H2O. It carries out the reaction D-ribulose 1,5-bisphosphate + O2 = 2-phosphoglycolate + (2R)-3-phosphoglycerate + 2 H(+). RuBisCO catalyzes two reactions: the carboxylation of D-ribulose 1,5-bisphosphate, the primary event in carbon dioxide fixation, as well as the oxidative fragmentation of the pentose substrate in the photorespiration process. Both reactions occur simultaneously and in competition at the same active site. The chain is Ribulose bisphosphate carboxylase large chain from Drosophyllum lusitanicum (Portuguese sundew).